We begin with the raw amino-acid sequence, 279 residues long: Large ribosomal subunit protein uL3 (279 aa).

Glutamine 151 bears the N5-methylglutamine mark.

It belongs to the universal ribosomal protein uL3 family. Part of the 50S ribosomal subunit. Forms a cluster with proteins L14 and L19. Post-translationally, methylated by PrmB.

In terms of biological role, one of the primary rRNA binding proteins, it binds directly near the 3'-end of the 23S rRNA, where it nucleates assembly of the 50S subunit. The protein is Large ribosomal subunit protein uL3 of Dinoroseobacter shibae (strain DSM 16493 / NCIMB 14021 / DFL 12).